We begin with the raw amino-acid sequence, 177 residues long: MSDTEDNKNKQTTRRDFIVLTASSVAAVGAACAFWPIIDSFNPSADVLALSSIEVDLSNIAIGQTVTVKWQGKPIFITNRTHDEIAAARAVKMSELIDPERDEVRVKAGHDNWLVTIGICTHLGCVPLSHKGEYNGWFCPCHGSQYDSSGRVRKGPAPLNLAVPPYIFISDKKIRIG.

The chain crosses the membrane as a helical span at residues 18 to 38 (IVLTASSVAAVGAACAFWPII). One can recognise a Rieske domain in the interval 88 to 175 (ARAVKMSELI…YIFISDKKIR (88 aa)). [2Fe-2S] cluster is bound by residues Cys-120, His-122, Cys-139, and His-142. Cys-125 and Cys-141 are oxidised to a cystine.

This sequence belongs to the Rieske iron-sulfur protein family. In terms of assembly, the main subunits of complex b-c1 are: cytochrome b, cytochrome c1 and the Rieske protein. Requires [2Fe-2S] cluster as cofactor.

The protein localises to the cell membrane. The enzyme catalyses a quinol + 2 Fe(III)-[cytochrome c](out) = a quinone + 2 Fe(II)-[cytochrome c](out) + 2 H(+)(out). In terms of biological role, component of the ubiquinol-cytochrome c reductase complex (complex III or cytochrome b-c1 complex), which is a respiratory chain that generates an electrochemical potential coupled to ATP synthesis. The protein is Ubiquinol-cytochrome c reductase iron-sulfur subunit (petA) of Rickettsia prowazekii (strain Madrid E).